The chain runs to 283 residues: ATP phosphoribosyltransferase (283 aa).

It belongs to the ATP phosphoribosyltransferase family. Long subfamily. Requires Mg(2+) as cofactor.

It is found in the cytoplasm. The catalysed reaction is 1-(5-phospho-beta-D-ribosyl)-ATP + diphosphate = 5-phospho-alpha-D-ribose 1-diphosphate + ATP. The protein operates within amino-acid biosynthesis; L-histidine biosynthesis; L-histidine from 5-phospho-alpha-D-ribose 1-diphosphate: step 1/9. Its activity is regulated as follows. Feedback inhibited by histidine. Functionally, catalyzes the condensation of ATP and 5-phosphoribose 1-diphosphate to form N'-(5'-phosphoribosyl)-ATP (PR-ATP). Has a crucial role in the pathway because the rate of histidine biosynthesis seems to be controlled primarily by regulation of HisG enzymatic activity. In Bifidobacterium longum (strain NCC 2705), this protein is ATP phosphoribosyltransferase.